We begin with the raw amino-acid sequence, 168 residues long: Endoribonuclease YbeY (168 aa).

The Zn(2+) site is built by histidine 126, histidine 130, and histidine 136.

Belongs to the endoribonuclease YbeY family. It depends on Zn(2+) as a cofactor.

It localises to the cytoplasm. In terms of biological role, single strand-specific metallo-endoribonuclease involved in late-stage 70S ribosome quality control and in maturation of the 3' terminus of the 16S rRNA. This Agrobacterium fabrum (strain C58 / ATCC 33970) (Agrobacterium tumefaciens (strain C58)) protein is Endoribonuclease YbeY.